Reading from the N-terminus, the 301-residue chain is Probable alpha-L-glutamate ligase (301 aa).

The region spanning 104–287 is the ATP-grasp domain; sequence LQLLSRRGIG…VAGIIIEHLE (184 aa). Residues lysine 141, 178 to 179, aspartate 187, and 211 to 213 each bind ATP; these read EY and RSN. Positions 248, 260, and 262 each coordinate Mg(2+). Mn(2+) contacts are provided by aspartate 248, glutamate 260, and asparagine 262.

It belongs to the RimK family. The cofactor is Mg(2+). Mn(2+) serves as cofactor.

The chain is Probable alpha-L-glutamate ligase from Pseudomonas fluorescens (strain Pf0-1).